Reading from the N-terminus, the 211-residue chain is uncharacterized protein (211 aa).

An N-terminal signal peptide occupies residues 1 to 27 (MKRTSAALVVFLILLFLGLLFLPMFIV).

This is an uncharacterized protein from Archaeoglobus fulgidus (strain ATCC 49558 / DSM 4304 / JCM 9628 / NBRC 100126 / VC-16).